A 498-amino-acid chain; its full sequence is ATP synthase subunit beta, chloroplastic (498 aa).

Gly-172–Thr-179 serves as a coordination point for ATP.

It belongs to the ATPase alpha/beta chains family. In terms of assembly, F-type ATPases have 2 components, CF(1) - the catalytic core - and CF(0) - the membrane proton channel. CF(1) has five subunits: alpha(3), beta(3), gamma(1), delta(1), epsilon(1). CF(0) has four main subunits: a(1), b(1), b'(1) and c(9-12).

Its subcellular location is the plastid. The protein resides in the chloroplast thylakoid membrane. The catalysed reaction is ATP + H2O + 4 H(+)(in) = ADP + phosphate + 5 H(+)(out). Produces ATP from ADP in the presence of a proton gradient across the membrane. The catalytic sites are hosted primarily by the beta subunits. The protein is ATP synthase subunit beta, chloroplastic of Populus alba (White poplar).